Reading from the N-terminus, the 167-residue chain is uncharacterized protein (167 aa).

The tract at residues 115 to 167 is disordered; sequence SYRSQPQLGFKSTPPAHSSVFHHSVKAPKEDQAQEAASRPLTSQDGWNPNIKK.

This is an uncharacterized protein from Homo sapiens (Human).